The sequence spans 314 residues: Ribosomal protein uL3 glutamine methyltransferase (314 aa).

The protein belongs to the protein N5-glutamine methyltransferase family. PrmB subfamily.

It carries out the reaction L-glutaminyl-[ribosomal protein uL3] + S-adenosyl-L-methionine = N(5)-methyl-L-glutaminyl-[ribosomal protein uL3] + S-adenosyl-L-homocysteine + H(+). Its function is as follows. Methylates large ribosomal subunit protein uL3 on a specific glutamine residue. In Haemophilus influenzae (strain ATCC 51907 / DSM 11121 / KW20 / Rd), this protein is Ribosomal protein uL3 glutamine methyltransferase.